Consider the following 261-residue polypeptide: Cytochrome c oxidase subunit 3 (261 aa).

At M1 to P15 the chain is on the mitochondrial matrix side. Residues W16 to W34 form a helical membrane-spanning segment. Topologically, residues F35–T40 are mitochondrial intermembrane. The helical transmembrane segment at T41–T66 threads the bilayer. Residues F67–T72 are Mitochondrial matrix-facing. A helical membrane pass occupies residues P73–S105. The Mitochondrial intermembrane segment spans residues L106–E128. A helical membrane pass occupies residues V129–M152. Over E153–E155 the chain is Mitochondrial matrix. A helical transmembrane segment spans residues R156–D183. Topologically, residues A184–D190 are mitochondrial intermembrane. Residues G191 to I223 traverse the membrane as a helical segment. Residues R224–H232 are Mitochondrial matrix-facing. A helical membrane pass occupies residues F233–I256. The Mitochondrial intermembrane segment spans residues Y257 to S261.

It belongs to the cytochrome c oxidase subunit 3 family. In terms of assembly, component of the cytochrome c oxidase (complex IV, CIV), a multisubunit enzyme composed of 14 subunits. The complex is composed of a catalytic core of 3 subunits MT-CO1, MT-CO2 and MT-CO3, encoded in the mitochondrial DNA, and 11 supernumerary subunits COX4I, COX5A, COX5B, COX6A, COX6B, COX6C, COX7A, COX7B, COX7C, COX8 and NDUFA4, which are encoded in the nuclear genome. The complex exists as a monomer or a dimer and forms supercomplexes (SCs) in the inner mitochondrial membrane with NADH-ubiquinone oxidoreductase (complex I, CI) and ubiquinol-cytochrome c oxidoreductase (cytochrome b-c1 complex, complex III, CIII), resulting in different assemblies (supercomplex SCI(1)III(2)IV(1) and megacomplex MCI(2)III(2)IV(2)).

The protein localises to the mitochondrion inner membrane. The enzyme catalyses 4 Fe(II)-[cytochrome c] + O2 + 8 H(+)(in) = 4 Fe(III)-[cytochrome c] + 2 H2O + 4 H(+)(out). Component of the cytochrome c oxidase, the last enzyme in the mitochondrial electron transport chain which drives oxidative phosphorylation. The respiratory chain contains 3 multisubunit complexes succinate dehydrogenase (complex II, CII), ubiquinol-cytochrome c oxidoreductase (cytochrome b-c1 complex, complex III, CIII) and cytochrome c oxidase (complex IV, CIV), that cooperate to transfer electrons derived from NADH and succinate to molecular oxygen, creating an electrochemical gradient over the inner membrane that drives transmembrane transport and the ATP synthase. Cytochrome c oxidase is the component of the respiratory chain that catalyzes the reduction of oxygen to water. Electrons originating from reduced cytochrome c in the intermembrane space (IMS) are transferred via the dinuclear copper A center (CU(A)) of subunit 2 and heme A of subunit 1 to the active site in subunit 1, a binuclear center (BNC) formed by heme A3 and copper B (CU(B)). The BNC reduces molecular oxygen to 2 water molecules using 4 electrons from cytochrome c in the IMS and 4 protons from the mitochondrial matrix. The chain is Cytochrome c oxidase subunit 3 (mt-co3) from Gadus morhua (Atlantic cod).